Consider the following 377-residue polypeptide: Ipis-1 (377 aa).

Asn11 and Asn226 each carry an N-linked (GlcNAc...) asparagine glycan.

Belongs to the serpin family. As to expression, female salivary gland. Not detected in midgut and other tissues.

The protein resides in the secreted. In terms of biological role, salivary protein with immunosuppressive properties that can modulate blood feeding of ticks on vertebrate species. Inhibits proliferation of bovine peripheral blood mononuclear cells (PBMCs). Inhibits IFN-gamma (IFNG) production by bovine PBMCs. In Ixodes persulcatus (Taiga tick), this protein is Ipis-1.